A 472-amino-acid chain; its full sequence is Na(+)/H(+) antiporter NhaA (472 aa).

Helical transmembrane passes span 24-44, 66-86, 108-128, 156-176, 196-216, 234-254, 290-310, 312-332, 361-381, and 392-412; these read ISGLIMLGFALTGLVLANLPA, LPIGHWAQDGLLTIFFLTVGL, LCAVGGMIAPPILFLAVTALF, GWAVPTATDIAFSLAVLALFA, LLAIILIAVFFSSINAWYWFI, VPWIAVGIVGILAWIMMFEAG, PFSALLALPIFALFATGVHFE, MSPLLLASPLVIALIVALVVG, MIPAAVACGIGFTVSFLIASL, and ARFGVLVASLIAAAISGVLLS. The interval 422 to 472 is disordered; the sequence is AAAAAADEEDDESIDGDGIGQPSHTTEPTTPTEHPGTLADGTASVEIDFRH. The span at 427-436 shows a compositional bias: acidic residues; the sequence is ADEEDDESID. Residues 445–456 show a composition bias toward low complexity; it reads HTTEPTTPTEHP.

Belongs to the NhaA Na(+)/H(+) (TC 2.A.33) antiporter family.

Its subcellular location is the cell membrane. The enzyme catalyses Na(+)(in) + 2 H(+)(out) = Na(+)(out) + 2 H(+)(in). Na(+)/H(+) antiporter that extrudes sodium in exchange for external protons. The chain is Na(+)/H(+) antiporter NhaA from Bifidobacterium longum (strain NCC 2705).